The primary structure comprises 205 residues: MKALTARQQQVYDLVRDHISQTGMPPTRAEIAASLGFRSPNAAEEHLKALARKGVIEIVSGASRGIRLLLEEETEDQGLPLIGRVAAGEPLLAQEHIESHYQVDPELFKPHADFLLRVNGMSMKDIGIMDGDLLAVHKTQNVHNGQVVVARIEDEVTVKRFKQQGNRVELIAENPEFEPIVVDLRQQNFTIEGLAVGVIRNSDWY.

A DNA-binding region (H-T-H motif) is located at residues arginine 28–lysine 48. Active-site for autocatalytic cleavage activity residues include serine 122 and lysine 159.

Belongs to the peptidase S24 family. In terms of assembly, homodimer.

It carries out the reaction Hydrolysis of Ala-|-Gly bond in repressor LexA.. Functionally, represses a number of genes involved in the response to DNA damage (SOS response), including recA and lexA. Binds to the 16 bp palindromic sequence 5'-CTGTATATATATACAG-3'. In the presence of single-stranded DNA, RecA interacts with LexA causing an autocatalytic cleavage which disrupts the DNA-binding part of LexA, leading to derepression of the SOS regulon and eventually DNA repair. This Providencia rettgeri protein is LexA repressor.